The chain runs to 314 residues: Replication initiation protein (314 aa).

It belongs to the plasmid replication initiation factor family.

In terms of biological role, this protein is probably a specific topoisomerase involved in initiating replication. This protein is specifically required and may be rate-limiting for replication of the plasmid in vivo. This chain is Replication initiation protein (repC), found in Staphylococcus aureus.